The following is a 392-amino-acid chain: Phosphoglycerate kinase (392 aa).

Substrate is bound by residues 21 to 23 (DFN), Arg-36, 59 to 62 (HLGR), Arg-113, and Arg-146. Residues Lys-197, Glu-319, and 345-348 (GGDT) each bind ATP.

This sequence belongs to the phosphoglycerate kinase family. As to quaternary structure, monomer.

The protein resides in the cytoplasm. The catalysed reaction is (2R)-3-phosphoglycerate + ATP = (2R)-3-phospho-glyceroyl phosphate + ADP. Its pathway is carbohydrate degradation; glycolysis; pyruvate from D-glyceraldehyde 3-phosphate: step 2/5. This Francisella tularensis subsp. holarctica (strain FTNF002-00 / FTA) protein is Phosphoglycerate kinase.